Consider the following 268-residue polypeptide: Tetratricopeptide repeat protein 33 (268 aa).

Positions valine 14–valine 34 are disordered. Positions glutamine 24–valine 34 are enriched in acidic residues. TPR repeat units lie at residues serine 60–aspartate 93, alanine 94–tryptophan 127, and tryptophan 128–glutamate 161. Residues glutamate 249–leucine 268 are disordered.

In Danio rerio (Zebrafish), this protein is Tetratricopeptide repeat protein 33 (ttc33).